The chain runs to 476 residues: 3-isopropylmalate dehydratase large subunit (476 aa).

The [4Fe-4S] cluster site is built by Cys357, Cys417, and Cys420.

It belongs to the aconitase/IPM isomerase family. LeuC type 1 subfamily. As to quaternary structure, heterodimer of LeuC and LeuD. The cofactor is [4Fe-4S] cluster.

It carries out the reaction (2R,3S)-3-isopropylmalate = (2S)-2-isopropylmalate. Its pathway is amino-acid biosynthesis; L-leucine biosynthesis; L-leucine from 3-methyl-2-oxobutanoate: step 2/4. In terms of biological role, catalyzes the isomerization between 2-isopropylmalate and 3-isopropylmalate, via the formation of 2-isopropylmaleate. The polypeptide is 3-isopropylmalate dehydratase large subunit (Mycolicibacterium paratuberculosis (strain ATCC BAA-968 / K-10) (Mycobacterium paratuberculosis)).